A 308-amino-acid chain; its full sequence is Probable manganese-dependent inorganic pyrophosphatase (308 aa).

Mn(2+) contacts are provided by histidine 9, aspartate 13, aspartate 15, aspartate 75, histidine 97, and aspartate 149.

The protein belongs to the PPase class C family. It depends on Mn(2+) as a cofactor.

It is found in the cytoplasm. It carries out the reaction diphosphate + H2O = 2 phosphate + H(+). This is Probable manganese-dependent inorganic pyrophosphatase from Listeria monocytogenes serotype 4a (strain HCC23).